Here is a 94-residue protein sequence, read N- to C-terminus: C-C motif chemokine 26 (94 aa).

Positions 1–23 (MKSFPVAFLVLLIFILSVHRGVT) are cleaved as a signal peptide. Intrachain disulfides connect C33/C57 and C34/C73.

The protein belongs to the intercrine beta (chemokine CC) family. In terms of assembly, monomer.

It is found in the secreted. Its function is as follows. Chemoattractant for eosinophils and basophils. Acts as a ligand for C-C chemokine receptor CCR3 which triggers Ca(2+) mobilization in eosinophils. Also acts as a ligand for CX3C chemokine receptor CX3CR1, inducing cell chemotaxis. The sequence is that of C-C motif chemokine 26 from Canis lupus familiaris (Dog).